The sequence spans 146 residues: Hemoglobin subunit beta (146 aa).

The Globin domain maps to 2 to 146 (FLTPEENGHV…VANALAHKYH (145 aa)). Residue T12 is modified to Phosphothreonine. Residue S44 is modified to Phosphoserine. K59 bears the N6-acetyllysine mark. H63 contributes to the heme b binding site. Position 82 is an N6-acetyllysine (K82). Position 92 (H92) interacts with heme b. C93 bears the S-nitrosocysteine mark. At K144 the chain carries N6-acetyllysine.

This sequence belongs to the globin family. As to quaternary structure, heterotetramer of two alpha chains and two beta chains. Red blood cells.

Functionally, involved in oxygen transport from the lung to the various peripheral tissues. This Hapalemur griseus (Gray gentle lemur) protein is Hemoglobin subunit beta (HBB).